The following is a 213-amino-acid chain: Phosphatidylethanolamine N-methyltransferase A (213 aa).

At 1-21 (MIVEHAIDYIDYLMNYVDFTE) the chain is on the lumenal side. An intramembrane region (helical) is located at residues 22 to 42 (KYFLLTIACVVFNPTWWNITA). Residues 43–54 (RMEYKTKFMTKI) are Lumenal-facing. The chain crosses the membrane as a helical span at residues 55-75 (CGSKENGCYLLAFLIFSLGIL). Residues 76-102 (RDWLFSEALIRQPIFQEFDRFEVEVLS) lie on the Cytoplasmic side of the membrane. A helical transmembrane segment spans residues 103-123 (YILYGFGGILVLAAYLKLGIT). 107-109 (GFG) is a binding site for S-adenosyl-L-methionine. Over 124–166 (GTYLGDYFGILMKERVTGFPFNVMNNPMYNGSVMLFIAHALSY) the chain is Lumenal. The chain crosses the membrane as a helical span at residues 167-187 (KSVAGLVLSFVVYVVYKFALI). Residues 188–213 (FEESFTNYIYSTAAANAAKKNKSKSK) lie on the Cytoplasmic side of the membrane. 189–190 (EE) is a binding site for S-adenosyl-L-methionine.

The protein belongs to the class VI-like SAM-binding methyltransferase superfamily. PEMT/PEM2 methyltransferase family.

It is found in the endoplasmic reticulum membrane. The protein localises to the mitochondrion membrane. It carries out the reaction a 1,2-diacyl-sn-glycero-3-phospho-N-methylethanolamine + S-adenosyl-L-methionine = a 1,2-diacyl-sn-glycero-3-phospho-N,N-dimethylethanolamine + S-adenosyl-L-homocysteine + H(+). The enzyme catalyses a 1,2-diacyl-sn-glycero-3-phospho-N,N-dimethylethanolamine + S-adenosyl-L-methionine = a 1,2-diacyl-sn-glycero-3-phosphocholine + S-adenosyl-L-homocysteine + H(+). It catalyses the reaction a 1,2-diacyl-sn-glycero-3-phosphoethanolamine + S-adenosyl-L-methionine = a 1,2-diacyl-sn-glycero-3-phospho-N-methylethanolamine + S-adenosyl-L-homocysteine + H(+). Its pathway is phospholipid metabolism; phosphatidylcholine biosynthesis. Functionally, catalyzes the three sequential steps of the methylation pathway of phosphatidylcholine biosynthesis, the SAM-dependent methylation of phosphatidylethanolamine (PE) to phosphatidylmonomethylethanolamine (PMME), PMME to phosphatidyldimethylethanolamine (PDME), and PDME to phosphatidylcholine (PC). The protein is Phosphatidylethanolamine N-methyltransferase A (pemtA) of Dictyostelium discoideum (Social amoeba).